Reading from the N-terminus, the 263-residue chain is Protein M1627_2099 (263 aa).

It belongs to the CinA family.

This chain is Protein M1627_2099, found in Saccharolobus islandicus (strain M.16.27) (Sulfolobus islandicus).